A 644-amino-acid polypeptide reads, in one-letter code: Exoribonuclease 2 (644 aa).

The region spanning 189–516 is the RNB domain; sequence RQDLTALNFV…NHRLLKAVIK (328 aa). The S1 motif domain occupies 561–643; that stretch reads NTRFAAEIID…ETRSIIARPA (83 aa).

This sequence belongs to the RNR ribonuclease family. RNase II subfamily.

It is found in the cytoplasm. It catalyses the reaction Exonucleolytic cleavage in the 3'- to 5'-direction to yield nucleoside 5'-phosphates.. Involved in mRNA degradation. Hydrolyzes single-stranded polyribonucleotides processively in the 3' to 5' direction. This Salmonella choleraesuis (strain SC-B67) protein is Exoribonuclease 2.